We begin with the raw amino-acid sequence, 349 residues long: Alanine racemase (349 aa).

Catalysis depends on K35, which acts as the Proton acceptor; specific for D-alanine. N6-(pyridoxal phosphate)lysine is present on K35. R130 is a binding site for substrate. Y244 functions as the Proton acceptor; specific for L-alanine in the catalytic mechanism. M292 provides a ligand contact to substrate.

The protein belongs to the alanine racemase family. Requires pyridoxal 5'-phosphate as cofactor.

The enzyme catalyses L-alanine = D-alanine. The protein operates within amino-acid biosynthesis; D-alanine biosynthesis; D-alanine from L-alanine: step 1/1. Its function is as follows. Catalyzes the interconversion of L-alanine and D-alanine. May also act on other amino acids. This is Alanine racemase (alr) from Cereibacter sphaeroides (strain KD131 / KCTC 12085) (Rhodobacter sphaeroides).